The primary structure comprises 47 residues: Large ribosomal subunit protein bL34 (47 aa).

Belongs to the bacterial ribosomal protein bL34 family.

The polypeptide is Large ribosomal subunit protein bL34 (Mycobacterium tuberculosis (strain ATCC 25177 / H37Ra)).